The following is a 405-amino-acid chain: MAGRGCGCSPGHLNEDNARFLLLAGLILLYLLGGAAVFSALELAQELQAKQRWEERLANFSRGHNLSREELRGFLRHYEEATRAGIRMDSVRPRWDFTGAFYFVGTVVSTIGFGMTTPATTGGKIFLIFYGLIGCASTILFFNLFLERLITVIACVMRSCHQQQLRRRGAVTQDNMKAPEKGEADSLTGWKPSVYYVMLILCLASVAISCGASALYTTMEGWSYFDSVYFCFVAFSTIGFGDLVSSQNAQYESQGLYRFFNFFLILMGVCCIYSLFNVISILIKQTVNWILRKLDSGCFPPCQRGLLRSRRNVVMPGNIRNRCNISIETDGVMESDTDGRRLSGEMISMKDTNKVSLAILQKQLSEMANGGPHQNSASSRDDEFSGGVGAFAVMNNRLAETSGDR.

The Cytoplasmic segment spans residues 1–19 (MAGRGCGCSPGHLNEDNAR). Residues 20–40 (FLLLAGLILLYLLGGAAVFSA) traverse the membrane as a helical segment. N-linked (GlcNAc...) asparagine glycans are attached at residues asparagine 59 and asparagine 65. Residues 95-115 (WDFTGAFYFVGTVVSTIGFGM) constitute an intramembrane region (pore-forming). Residues threonine 110, isoleucine 111, and glycine 112 each contribute to the K(+) site. The tract at residues 110-115 (TIGFGM) is selectivity filter 1. Residues 125–145 (IFLIFYGLIGCASTILFFNLF) form a helical membrane-spanning segment. The Cytoplasmic portion of the chain corresponds to 146 to 193 (LERLITVIACVMRSCHQQQLRRRGAVTQDNMKAPEKGEADSLTGWKPS). A helical transmembrane segment spans residues 194-214 (VYYVMLILCLASVAISCGASA). An intramembrane region (pore-forming) is located at residues 224–244 (YFDSVYFCFVAFSTIGFGDLV). Threonine 237, isoleucine 238, glycine 239, and phenylalanine 240 together coordinate K(+). Residues 237–242 (TIGFGD) are selectivity filter 2. The helical transmembrane segment at 263 to 283 (FLILMGVCCIYSLFNVISILI) threads the bilayer. At 284–405 (KQTVNWILRK…NRLAETSGDR (122 aa)) the chain is on the cytoplasmic side.

It belongs to the two pore domain potassium channel (TC 1.A.1.8) family. In terms of assembly, homodimer. Heterodimer with KCNK12.

Its subcellular location is the cell membrane. It catalyses the reaction K(+)(in) = K(+)(out). K(+) channel that conducts outward rectifying tonic currents potentiated by purinergic signals. Homo- and heterodimerizes to form functional channels with distinct regulatory and gating properties. Contributes most of K(+) currents at the plasma membrane of resting microglia. Maintains a depolarized membrane potential required for proper ramified microglia morphology and phagocytosis, selectively mediating microglial pruning of presynaptic compartments at hippocampal excitatory synapses. Upon local release of ATP caused by neuronal injury or infection, it is potentiated by P2RY12 and P2RX7 receptor signaling and contributes to ATP-triggered K(+) efflux underlying microglial NLRP3 inflammasome assembly and IL1B release. In Mus musculus (Mouse), this protein is Potassium channel subfamily K member 13.